A 1165-amino-acid chain; its full sequence is MPNSVLWAVDLFGRVYTLSTAGQYWELCKDSQLEFKRVSATTQCCWGIACDNQVYVYVCASDVPIRRREEAYENQRWNPVGGFCEKLLLSDRWAWSDVSGLQHRPLDGVALPSPHWEWESDWYVDENFGGEPTEKGGWTYAIDFPATYTKEKKWNSCVRRRKWIRYRRYKSRDIWAKIPSKDDPKELPDPFNDLSVGGWEIAEEPVGRLSVWAVSLQGKVWYREDVSHSNPEGSSWSLLDTPGEVVQISCGPHDLLWATLWEGQALVREGINRSNPKGSSWSIVEPPGSDNGIMHVSVGVSVVWAVTKDWKVWFRRGINSHNPCGTSWIEMVGEMTMVNVGMNDQVWGIGCEDRAVYFRQGVTPSELSGKTWKAIVAARECDRSHSGSSSSLLSAGCFFGDEVRGSGESAPSDTDASSEVERPGPGQTLPAEPLDDSKNAMENSASGPGAGRTTEDTVEDACPAEGSREARPNTHPGPATTPAELPWTNIDLKEPKKVPSHSAAGFPETTSLSSLGLFPLGLEEPYGVDDHPLRAWVSGGGCMVEACAVPRWFTVQAGLSSSVHMLSLSITPAQTAAWRKQIFQQLTERTKRELENFRHYEQAVEQSVWVKTGALQWWCDWKPHKWVDVRVALEQFTGHDGARDSILFIYYVVHEEKKYIHIFLNEVVALVPVLNETKHSFALYTPERTRQRWPVRLAAATEQDMNDWLALLSLSCCESRKVQGRPSPQAIWSITCKGDIFVSEPSPDLEAHEHPLPCDQMFWRQMGGHLRMVEANSRGVVWGIGYDHTAWVYTGGYGGGCFQGLASSTSNIYMQSDVKCVHIYENQRWNPVTGYTSRGLPTDRYMWSDASGLQECTKAGTKPPSLQWAWVSDWFVDFSVPGGTDQEGWQYASDFPASYHGSKTMKDFVRRRCRARKCKLVTSGPWLEVPPIALRDVSIIPESPGAEGSGHSIALWAVSDKGDVLCRLGVSELNPAGSSWLHVGTDQPFTSISIGACYQVWAVARDGSTFYRGSVYPSQPAGDCWYHIPSPPRQRLKQVSVGQTSVYALDENGNLWYRQGITPSYPQGSSWEHVSNNVCRVSVGPLDQVWVIADKVQGSHSLSRGTVCHRTGVQPHEPKGHGWDYGIGGGWDHISVRANATRAPRSSSQEQEPSAPPEAHDPVCC.

4 TECPR repeats span residues 209–240, 254–285, 301–332, and 344–376; these read LSVW…SLLD, DLLW…SIVE, SVVW…IEMV, and DQVW…KAIV. Residues 404-486 form a disordered region; that stretch reads RGSGESAPSD…GPATTPAELP (83 aa). The 107-residue stretch at 611-717 folds into the PH domain; the sequence is KTGALQWWCD…WLALLSLSCC (107 aa). A TECPR 5 repeat occupies 729–756; that stretch reads QAIWSITCKGDIFVSEPSPDLEAHEHPL. Residues Ser-938 and Ser-949 each carry the phosphoserine modification. TECPR repeat units follow at residues 953-984, 998-1029, 1044-1075, and 1087-1127; these read IALW…LHVG, YQVW…YHIP, TSVY…EHVS, and DQVW…DYGI. Residues 1140-1165 are disordered; it reads ATRAPRSSSQEQEPSAPPEAHDPVCC. Residues 1143-1153 show a composition bias toward low complexity; it reads APRSSSQEQEP.

This sequence belongs to the TECPR1 family. Interacts with ATG5; the interaction is direct. Interacts with WIPI2. Interacts with the ATG5-ATG12 conjugate, the interaction is however mutually exclusive with ATG16, since it does not interact with ATG12-ATG5-ATG16 complex.

It localises to the cytoplasmic vesicle. The protein localises to the autophagosome membrane. The protein resides in the lysosome membrane. Its function is as follows. Tethering factor involved in autophagy. Involved in autophagosome maturation by promoting the autophagosome fusion with lysosomes: acts by associating with both the ATG5-ATG12 conjugate and phosphatidylinositol-3-phosphate (PtdIns(3)P) present at the surface of autophagosomes. Also involved in selective autophagy against bacterial pathogens, by being required for phagophore/preautophagosomal structure biogenesis and maturation. This Pongo abelii (Sumatran orangutan) protein is Tectonin beta-propeller repeat-containing protein 1 (TECPR1).